The following is a 169-amino-acid chain: uncharacterized protein (169 aa).

This is an uncharacterized protein from Methanocaldococcus jannaschii (strain ATCC 43067 / DSM 2661 / JAL-1 / JCM 10045 / NBRC 100440) (Methanococcus jannaschii).